A 267-amino-acid chain; its full sequence is MKKVTIRDFIKKKSTKEKITMLTAYDYPTAKIISNTGLDSILVGDSLGMVVLGYPNTLNVTMRDMISHTRAVARANPPQLIVADMPFLSYEIDTKSAVKNAGLLVKAGSDAIKLEGGEEMKDTVKAIVKAGIPVMGHIGLTPQRFLRLGGFRTIGKTKQEEDQLIKDSLELEDAGVFSLVIENTYVDIAKRITEKLNIPTICIGAGPYCDGQVLVINDLLGLSEFTPYFAKSYVNLKEIISNAINQYIIDVKNNKFPEKQHYKERES.

The Mg(2+) site is built by Asp-45 and Asp-84. Residues 45 to 46 (DS), Asp-84, and Lys-113 contribute to the 3-methyl-2-oxobutanoate site. Glu-115 contacts Mg(2+). Glu-182 acts as the Proton acceptor in catalysis.

This sequence belongs to the PanB family. Homodecamer; pentamer of dimers. It depends on Mg(2+) as a cofactor.

The protein localises to the cytoplasm. The enzyme catalyses 3-methyl-2-oxobutanoate + (6R)-5,10-methylene-5,6,7,8-tetrahydrofolate + H2O = 2-dehydropantoate + (6S)-5,6,7,8-tetrahydrofolate. It functions in the pathway cofactor biosynthesis; coenzyme A biosynthesis. In terms of biological role, catalyzes the reversible reaction in which hydroxymethyl group from 5,10-methylenetetrahydrofolate is transferred onto alpha-ketoisovalerate to form ketopantoate. The protein is 3-methyl-2-oxobutanoate hydroxymethyltransferase of Saccharolobus islandicus (strain Y.N.15.51 / Yellowstone #2) (Sulfolobus islandicus).